The following is a 242-amino-acid chain: Protein CDV3 homolog B (242 aa).

Basic and acidic residues predominate over residues 1 to 15; the sequence is MAEPEERSLDDFFAK. The tract at residues 1–242 is disordered; it reads MAEPEERSLD…DNQYAVLGEQ (242 aa). An N-acetylalanine modification is found at A2. The span at 30 to 57 shows a compositional bias: low complexity; that stretch reads AAGSRGPARPSDGATSSSLSSYVSAAGK. Residues 59-75 show a composition bias toward basic and acidic residues; it reads VKKEKSGKSENPDQLQE. The segment covering 105–122 has biased composition (acidic residues); that stretch reads KEDDENENKEEQGADWEE. 2 stretches are compositionally biased toward polar residues: residues 129 to 143 and 183 to 194; these read DKSS…QAQA and SDTQFPSPQATA. Positions 195–213 are enriched in basic and acidic residues; it reads KHTESRREKEMEKTFEIVK.

The protein belongs to the CDV3 family.

Its subcellular location is the cytoplasm. The protein is Protein CDV3 homolog B (cdv3-b) of Xenopus laevis (African clawed frog).